A 554-amino-acid polypeptide reads, in one-letter code: Potassium-transporting ATPase potassium-binding subunit (554 aa).

A run of 12 helical transmembrane segments spans residues 1–21 (MSSQ…LALA), 59–79 (WPAY…FLYL), 131–151 (GLAV…VALV), 174–194 (VRIL…AGAI), 246–266 (PNPL…FALT), 279–299 (GYAI…LMMW), 323–343 (FGIA…TGAV), 352–372 (GFGG…PGGV), 375–395 (GLYG…LMVG), 412–432 (FAAC…AVAM), 481–501 (IGIA…ALAG), and 525–545 (GLLV…ALAL).

This sequence belongs to the KdpA family. In terms of assembly, the system is composed of three essential subunits: KdpA, KdpB and KdpC.

It localises to the cell membrane. In terms of biological role, part of the high-affinity ATP-driven potassium transport (or Kdp) system, which catalyzes the hydrolysis of ATP coupled with the electrogenic transport of potassium into the cytoplasm. This subunit binds the extracellular potassium ions and delivers the ions to the membrane domain of KdpB through an intramembrane tunnel. This chain is Potassium-transporting ATPase potassium-binding subunit, found in Streptomyces griseus subsp. griseus (strain JCM 4626 / CBS 651.72 / NBRC 13350 / KCC S-0626 / ISP 5235).